A 349-amino-acid chain; its full sequence is Glycerol-3-phosphate dehydrogenase [NAD(P)+] (349 aa).

Residues tryptophan 20, arginine 43, arginine 44, and lysine 117 each coordinate NADPH. Positions 117 and 147 each coordinate sn-glycerol 3-phosphate. Alanine 151 is a binding site for NADPH. 5 residues coordinate sn-glycerol 3-phosphate: lysine 202, aspartate 255, serine 265, arginine 266, and asparagine 267. The active-site Proton acceptor is lysine 202. Arginine 266 serves as a coordination point for NADPH. Residues valine 297 and glutamate 299 each contribute to the NADPH site.

It belongs to the NAD-dependent glycerol-3-phosphate dehydrogenase family.

The protein localises to the cytoplasm. It catalyses the reaction sn-glycerol 3-phosphate + NAD(+) = dihydroxyacetone phosphate + NADH + H(+). The catalysed reaction is sn-glycerol 3-phosphate + NADP(+) = dihydroxyacetone phosphate + NADPH + H(+). It participates in membrane lipid metabolism; glycerophospholipid metabolism. Functionally, catalyzes the reduction of the glycolytic intermediate dihydroxyacetone phosphate (DHAP) to sn-glycerol 3-phosphate (G3P), the key precursor for phospholipid synthesis. The protein is Glycerol-3-phosphate dehydrogenase [NAD(P)+] of Mycobacterium leprae (strain TN).